Consider the following 269-residue polypeptide: tRNA pseudouridine synthase A (269 aa).

Asp51 functions as the Nucleophile in the catalytic mechanism. Residue Tyr109 coordinates substrate.

The protein belongs to the tRNA pseudouridine synthase TruA family. As to quaternary structure, homodimer.

The catalysed reaction is uridine(38/39/40) in tRNA = pseudouridine(38/39/40) in tRNA. In terms of biological role, formation of pseudouridine at positions 38, 39 and 40 in the anticodon stem and loop of transfer RNAs. This is tRNA pseudouridine synthase A from Haemophilus influenzae (strain 86-028NP).